The chain runs to 290 residues: BEL1-like homeodomain protein 11 (290 aa).

Residues 20-36 form an SR/KY domain region; sequence SRYAKAVQCLVEEVIDI. Positions 81 to 152 are BELL domain; it reads ENHEIHIKIT…SLEEAIISQL (72 aa). The segment at residues 202–264 is a DNA-binding region (homeobox); sequence AWKPIRGLPE…NARVRLWKPM (63 aa).

Belongs to the TALE/BELL homeobox family. May form heterodimeric complexes with TALE/KNOX proteins.

The protein resides in the nucleus. This is BEL1-like homeodomain protein 11 (BLH11) from Arabidopsis thaliana (Mouse-ear cress).